A 379-amino-acid polypeptide reads, in one-letter code: Cobalt-precorrin-5B C(1)-methyltransferase (379 aa).

Belongs to the CbiD family.

The enzyme catalyses Co-precorrin-5B + S-adenosyl-L-methionine = Co-precorrin-6A + S-adenosyl-L-homocysteine. The protein operates within cofactor biosynthesis; adenosylcobalamin biosynthesis; cob(II)yrinate a,c-diamide from sirohydrochlorin (anaerobic route): step 6/10. In terms of biological role, catalyzes the methylation of C-1 in cobalt-precorrin-5B to form cobalt-precorrin-6A. This is Cobalt-precorrin-5B C(1)-methyltransferase from Edwardsiella ictaluri (strain 93-146).